Consider the following 336-residue polypeptide: Ribosomal RNA large subunit methyltransferase F (336 aa).

The protein belongs to the methyltransferase superfamily. METTL16/RlmF family.

It is found in the cytoplasm. The enzyme catalyses adenosine(1618) in 23S rRNA + S-adenosyl-L-methionine = N(6)-methyladenosine(1618) in 23S rRNA + S-adenosyl-L-homocysteine + H(+). Specifically methylates the adenine in position 1618 of 23S rRNA. This is Ribosomal RNA large subunit methyltransferase F from Yersinia pestis bv. Antiqua (strain Nepal516).